The sequence spans 162 residues: Peptidyl-prolyl cis-trans isomerase (162 aa).

The 157-residue stretch at 5-161 (FFDVIANGQP…ARIVIDKCGT (157 aa)) folds into the PPIase cyclophilin-type domain.

It belongs to the cyclophilin-type PPIase family. PPIase A subfamily.

Its subcellular location is the cytoplasm. It carries out the reaction [protein]-peptidylproline (omega=180) = [protein]-peptidylproline (omega=0). With respect to regulation, binds cyclosporin A (CsA). CsA mediates some of its effects via an inhibitory action on PPIase. In terms of biological role, PPIases accelerate the folding of proteins. It catalyzes the cis-trans isomerization of proline imidic peptide bonds in oligopeptides. This Schizosaccharomyces pombe (strain 972 / ATCC 24843) (Fission yeast) protein is Peptidyl-prolyl cis-trans isomerase (ppi1).